A 194-amino-acid polypeptide reads, in one-letter code: dTTP/UTP pyrophosphatase (194 aa).

The active-site Proton acceptor is Asp-68.

The protein belongs to the Maf family. YhdE subfamily. The cofactor is a divalent metal cation.

Its subcellular location is the cytoplasm. The catalysed reaction is dTTP + H2O = dTMP + diphosphate + H(+). It catalyses the reaction UTP + H2O = UMP + diphosphate + H(+). Functionally, nucleoside triphosphate pyrophosphatase that hydrolyzes dTTP and UTP. May have a dual role in cell division arrest and in preventing the incorporation of modified nucleotides into cellular nucleic acids. This Clostridioides difficile (strain 630) (Peptoclostridium difficile) protein is dTTP/UTP pyrophosphatase.